The following is a 124-amino-acid chain: Small ribosomal subunit protein bS16 (124 aa).

Residues 81 to 90 (LKKRPARNNP) are compositionally biased toward basic residues. Residues 81–124 (LKKRPARNNPHKGEPGKKAQERIAAAKQAAEDAAAAAEADSASE) are disordered. Basic and acidic residues predominate over residues 91 to 101 (HKGEPGKKAQE). The span at 102–124 (RIAAAKQAAEDAAAAAEADSASE) shows a compositional bias: low complexity.

Belongs to the bacterial ribosomal protein bS16 family.

The protein is Small ribosomal subunit protein bS16 of Bartonella tribocorum (strain CIP 105476 / IBS 506).